The primary structure comprises 147 residues: Transcription antitermination protein NusB (147 aa).

Belongs to the NusB family.

Involved in transcription antitermination. Required for transcription of ribosomal RNA (rRNA) genes. Binds specifically to the boxA antiterminator sequence of the ribosomal RNA (rrn) operons. This chain is Transcription antitermination protein NusB, found in Legionella pneumophila (strain Paris).